Consider the following 621-residue polypeptide: tRNA uridine 5-carboxymethylaminomethyl modification enzyme MnmG (621 aa).

Residue 9–14 coordinates FAD; that stretch reads GGGHAG. Residue 270–284 participates in NAD(+) binding; the sequence is GPRYCPSIEDKIVKF.

The protein belongs to the MnmG family. Homodimer. Heterotetramer of two MnmE and two MnmG subunits. FAD is required as a cofactor.

Its subcellular location is the cytoplasm. Functionally, NAD-binding protein involved in the addition of a carboxymethylaminomethyl (cmnm) group at the wobble position (U34) of certain tRNAs, forming tRNA-cmnm(5)s(2)U34. The chain is tRNA uridine 5-carboxymethylaminomethyl modification enzyme MnmG from Borreliella burgdorferi (strain ATCC 35210 / DSM 4680 / CIP 102532 / B31) (Borrelia burgdorferi).